The following is a 379-amino-acid chain: Putative glutamate--cysteine ligase 2 (379 aa).

It belongs to the glutamate--cysteine ligase type 2 family. YbdK subfamily.

It catalyses the reaction L-cysteine + L-glutamate + ATP = gamma-L-glutamyl-L-cysteine + ADP + phosphate + H(+). Its function is as follows. ATP-dependent carboxylate-amine ligase which exhibits weak glutamate--cysteine ligase activity. In Mycobacterium avium (strain 104), this protein is Putative glutamate--cysteine ligase 2.